The following is a 440-amino-acid chain: Actin-like protein 7A (440 aa).

Residues 1–27 (MSLDAVWAPQTANIGDGPAKKASDQTS) form a disordered region. The tract at residues 36 to 56 (ASLRDGPAKRAVWVRRDNAEK) is required for interaction with TES.

Belongs to the actin family. As to quaternary structure, interacts (via N-terminus) with TES (via LIM domain 2). Heterodimer with TES; the heterodimer interacts with ENAH to form a heterotrimer. Interacts with ACTL9. Interacts with CYLC1; the interaction may be relevant for proper acrosome attachment to the nuclear envelope. As to expression, detected in testis. Detected at the acrosome of round spermatids (at protein level).

The protein resides in the cytoplasm. It is found in the cytoskeleton. The protein localises to the golgi apparatus. It localises to the nucleus. Its function is as follows. Essential for normal spermatogenesis and male fertility. Required for normal sperm head morphology, acroplaxome formation, acrosome attachment, and acrosome granule stability. May anchor and stabilize acrosomal adherence to the acroplaxome at least in part by facilitating the presence of F-actin in the subacrosomal space. May play an important role in formation and fusion of Golgi-derived vesicles during acrosome biogenesis. This chain is Actin-like protein 7A (Actl7a), found in Rattus norvegicus (Rat).